Reading from the N-terminus, the 487-residue chain is Probable aspartic-type endopeptidase opsB (487 aa).

Positions 1–20 (MQKSWLVLLVACLGLQGTTA) are cleaved as a signal peptide. Positions 69–398 (YFCNITLGTP…DLSNNEISLA (330 aa)) constitute a Peptidase A1 domain. Asn72 is a glycosylation site (N-linked (GlcNAc...) asparagine). Residue Asp87 is part of the active site. Residues Asn99, Asn111, Asn132, and Asn272 are each glycosylated (N-linked (GlcNAc...) asparagine). The active site involves Asp286. Asn329 and Asn403 each carry an N-linked (GlcNAc...) asparagine glycan. The GPI-anchor amidated alanine moiety is linked to residue Ala463. Positions 464-487 (PAGPTDVPKHLVLGAAAIGYVLAF) are cleaved as a propeptide — removed in mature form.

It belongs to the peptidase A1 family.

The protein localises to the cell membrane. In terms of biological role, probable GPI-anchored aspartic-type endopeptidase. This is Probable aspartic-type endopeptidase opsB (opsB) from Aspergillus oryzae (strain ATCC 42149 / RIB 40) (Yellow koji mold).